The primary structure comprises 4007 residues: PKS-NRPS hybrid synthetase psoA (4007 aa).

Residues 8-444 (KEPIAIIGTG…GTNCHAIVES (437 aa)) form the Ketosynthase family 3 (KS3) domain. Residues Cys-182, His-321, and His-364 each act as for beta-ketoacyl synthase activity in the active site. The malonyl-CoA:ACP transacylase (MAT) domain stretch occupies residues 575–897 (VFTGQGAQWA…VLDRKADDIL (323 aa)). Positions 969-1105 (HPLLGSRTPD…GHIRITLAAE (137 aa)) are N-terminal hotdog fold. The tract at residues 969 to 1147 (HPLLGSRTPD…LSYSGPFRAM (179 aa)) is dehydratase (DH) domain. The 308-residue stretch at 969-1276 (HPLLGSRTPD…MSSFLPASEK (308 aa)) folds into the PKS/mFAS DH domain. The active-site Proton acceptor; for dehydratase activity is the His-1001. Residues 1120-1276 (DLLPTSVDRF…MSSFLPASEK (157 aa)) form a C-terminal hotdog fold region. Residue Asp-1179 is the Proton donor; for dehydratase activity of the active site. A ketoreductase (KR) domain region spans residues 2131 to 2305 (TYLLVGLTGH…PASVIDIGMV (175 aa)). Residues 2418–2495 (EARKVMENAL…QICDEVVASL (78 aa)) form the Carrier 1 domain. Residue Ser-2455 is modified to O-(pantetheine 4'-phosphoryl)serine. Residues 2513–2550 (PAHKLRPWDKPSADTKRTDSIAPVPRSQIAANGPNGLP) are disordered. The span at 2518–2531 (RPWDKPSADTKRTD) shows a compositional bias: basic and acidic residues. A condensation (C) domain region spans residues 2589–2885 (QPLSLGQSRL…LETIPLWFKV (297 aa)). The adenylation (A) domain stretch occupies residues 3076-3478 (TYVQLAERAN…LGDVARALVQ (403 aa)). In terms of domain architecture, Carrier 2 spans 3576–3652 (TPTEARLRDV…LLAARLDGTS (77 aa)). Position 3612 is an O-(pantetheine 4'-phosphoryl)serine (Ser-3612). Positions 3696–3920 (LTGATGFLGG…INVETVSNNI (225 aa)) are reductase (R) domain.

It in the C-terminal section; belongs to the NRP synthetase family.

It functions in the pathway secondary metabolite biosynthesis. Its function is as follows. PKS-NRPS hybrid synthetase; part of the gene cluster that mediates the biosynthesis of pseurotin A, a competitive inhibitor of chitin synthase and an inducer of nerve-cell proliferation. The PKS-NRPS hybrid synthetase psoA is responsible for the biosynthesis of azaspirene, one of the first intermediates having the 1-oxa-7-azaspiro[4,4]-non-2-ene-4,6-dione core of pseurotin, via condensation of one acetyl-CoA, 4 malonyl-CoA, and a L-phenylalanine molecule. The dual-functional monooxygenase/methyltransferase psoF seems to be involved in the addition of the C3 methyl group onto the pseurotin scaffold. Azaspirene is then converted to synerazol through 4 steps including oxidation of C17 by the cytochrome P450 monooxygenase psoD, O-methylation of the hydroxy group of C8 by the methyltransferase psoC, and the trans-to-cis isomerization of the C13 olefin by the glutathione S-transferase psoE. The fourth step of synerazol production is performed by the dual-functional monooxygenase/methyltransferase psoF which seems to catalyze the epoxidation of the intermediate deepoxy-synerazol. Synerazol can be attacked by a water molecule nonenzymatically at two different positions to yield two diol products, pseurotin A and pseurotin D. The sequence is that of PKS-NRPS hybrid synthetase psoA from Aspergillus fumigatus (strain ATCC MYA-4609 / CBS 101355 / FGSC A1100 / Af293) (Neosartorya fumigata).